The sequence spans 104 residues: N(4)-acetylcytidine amidohydrolase (104 aa).

An ASCH domain is found at 7-93; sequence MTFFSRFEAD…EVIQEIYPGI (87 aa). The Proton acceptor role is filled by K22. T25 acts as the Nucleophile in catalysis. E75 serves as the catalytic Proton donor.

This sequence belongs to the N(4)-acetylcytidine amidohydrolase family.

It catalyses the reaction N(4)-acetylcytidine + H2O = cytidine + acetate + H(+). The catalysed reaction is N(4)-acetyl-2'-deoxycytidine + H2O = 2'-deoxycytidine + acetate + H(+). It carries out the reaction N(4)-acetylcytosine + H2O = cytosine + acetate + H(+). Its function is as follows. Catalyzes the hydrolysis of N(4)-acetylcytidine (ac4C). This Vibrio vulnificus (strain YJ016) protein is N(4)-acetylcytidine amidohydrolase.